The chain runs to 884 residues: DNA mismatch repair protein MutS (884 aa).

An ATP-binding site is contributed by 651–658 (GPNMSGKS). The interval 843–884 (LRNQGKSQPAQKNCKKEPAPNRSPDPAVGDQLSLIPAPLFPD) is disordered.

Belongs to the DNA mismatch repair MutS family.

Functionally, this protein is involved in the repair of mismatches in DNA. It is possible that it carries out the mismatch recognition step. This protein has a weak ATPase activity. The polypeptide is DNA mismatch repair protein MutS (Synechococcus sp. (strain JA-2-3B'a(2-13)) (Cyanobacteria bacterium Yellowstone B-Prime)).